Consider the following 141-residue polypeptide: HTH-type transcriptional repressor NsrR (141 aa).

An HTH rrf2-type domain is found at 2 to 129; sequence QLTSFTDYGL…DNYTLADLVE (128 aa). Positions 28 to 51 form a DNA-binding region, H-T-H motif; the sequence is ISEVTDVYGVSRNHMVKIINQLSR. Residues cysteine 91, cysteine 96, and cysteine 102 each contribute to the [2Fe-2S] cluster site.

The cofactor is [2Fe-2S] cluster.

Its function is as follows. Nitric oxide-sensitive repressor of genes involved in protecting the cell against nitrosative stress. May require iron for activity. This is HTH-type transcriptional repressor NsrR from Escherichia fergusonii (strain ATCC 35469 / DSM 13698 / CCUG 18766 / IAM 14443 / JCM 21226 / LMG 7866 / NBRC 102419 / NCTC 12128 / CDC 0568-73).